We begin with the raw amino-acid sequence, 274 residues long: MSASGEISTPRDYIGHHLNNLQLDLRTFELVNPHSPGPATFWTLNIDSLFFSVVLGLAFLFVFRKVAAGATSGVPGKLQTAVELIIGFVDNSVRDMYHGKSKVIAPLALTVFVWVLLMNMMDLLPIDLLPYIGEHVFGLPALRVVPTADVSITLSMALGVFILILFYSIKMKGVGGFVKELTMQPFNHPIFIPVNLILEGVSLLSKPVSLGLRLFGNMYAGELIFILIAGLLPWWSQWMLSLPWAIFHILIITLQAFIFMVLTIVYLSMASEEH.

The next 5 helical transmembrane spans lie at Thr-43–Phe-63, Val-103–Leu-123, Asp-149–Ile-169, Leu-223–Pro-243, and Ala-245–Val-265.

It belongs to the ATPase A chain family. As to quaternary structure, F-type ATPases have 2 components, CF(1) - the catalytic core - and CF(0) - the membrane proton channel. CF(1) has five subunits: alpha(3), beta(3), gamma(1), delta(1), epsilon(1). CF(0) has three main subunits: a(1), b(2) and c(9-12). The alpha and beta chains form an alternating ring which encloses part of the gamma chain. CF(1) is attached to CF(0) by a central stalk formed by the gamma and epsilon chains, while a peripheral stalk is formed by the delta and b chains.

The protein localises to the cell inner membrane. In terms of biological role, key component of the proton channel; it plays a direct role in the translocation of protons across the membrane. This chain is ATP synthase subunit a, found in Yersinia enterocolitica serotype O:8 / biotype 1B (strain NCTC 13174 / 8081).